We begin with the raw amino-acid sequence, 176 residues long: RNA pyrophosphohydrolase (176 aa).

Positions 6–149 constitute a Nudix hydrolase domain; the sequence is GYRPNVGIVI…KRDVYRRVMK (144 aa). Residues 38–59 carry the Nudix box motif; it reads GGINPGESPEQAMYRELYEEVG.

This sequence belongs to the Nudix hydrolase family. RppH subfamily. It depends on a divalent metal cation as a cofactor.

In terms of biological role, accelerates the degradation of transcripts by removing pyrophosphate from the 5'-end of triphosphorylated RNA, leading to a more labile monophosphorylated state that can stimulate subsequent ribonuclease cleavage. The polypeptide is RNA pyrophosphohydrolase (Photorhabdus laumondii subsp. laumondii (strain DSM 15139 / CIP 105565 / TT01) (Photorhabdus luminescens subsp. laumondii)).